A 503-amino-acid polypeptide reads, in one-letter code: AQLVDSMPSASTGSVVVTDDLNYWGGRRIKSKDGATTEPVFEPATGRVLCQMVPCGAEEVDQAVQSAQAAYLKWSKMAGIERSRVMLEAARIIRERRDNIAKLEVINNGKTITEAEYDIDAAWQCIEYYAGLAPTLSGQHIQLPGGAFAYTRREPLGVCAGILAWNYPFMIAAWKCAPALACGNAVVFKPSPMTPVTGVILAEIFHEAGVPVGLVNVVQGGAETGSLLCHHPNVAKVSFTGSVPTGKKVMEMSAKTVKHVTLELGGKSPLLIFKDCELENAVRGALMANFLTQGQVCTNGTRVFVQREIMPQFLEEVVKRTKAIVVGDPLLTETRMGGLISKPQLDKVLGFVAQAKKEGARVLCGGEPLTPSDPKLKNGYFMSPCVLDNCRDDMTCVKEEIFGPVMSVLPFDTEEEVLQRANNTTFGLASGVFTRDISRAHRVAANLEAGTCYINTYSISPVEVPFGGYKMSGFGRENGQATVDYYSQLKTVIVEMGDVDSLF.

NAD(+) is bound by residues Lys-189 and 241-245 (GSVPT). Glu-263 serves as the catalytic Proton acceptor. Cys-297 functions as the Nucleophile in the catalytic mechanism. Position 400 (Glu-400) interacts with NAD(+).

It belongs to the aldehyde dehydrogenase family. Homotetramer.

The protein localises to the cytoplasm. It localises to the cytosol. The catalysed reaction is 4-(trimethylamino)butanal + NAD(+) + H2O = 4-(trimethylamino)butanoate + NADH + 2 H(+). The enzyme catalyses an aldehyde + NAD(+) + H2O = a carboxylate + NADH + 2 H(+). Its pathway is amine and polyamine biosynthesis; carnitine biosynthesis. Its function is as follows. Converts gamma-trimethylaminobutyraldehyde into gamma-butyrobetaine with high efficiency (in vitro). Can catalyze the irreversible oxidation of a broad range of aldehydes to the corresponding acids in an NAD-dependent reaction, but with low efficiency. In Gadus morhua subsp. callarias (Baltic cod), this protein is 4-trimethylaminobutyraldehyde dehydrogenase (aldh9A1).